The sequence spans 171 residues: Co-chaperone protein HscB (171 aa).

The J domain occupies 2-74; it reads DYFTLFGLPA…LMRAEYLLSL (73 aa).

The protein belongs to the HscB family. As to quaternary structure, interacts with HscA and stimulates its ATPase activity. Interacts with IscU.

Functionally, co-chaperone involved in the maturation of iron-sulfur cluster-containing proteins. Seems to help targeting proteins to be folded toward HscA. This Escherichia coli (strain SE11) protein is Co-chaperone protein HscB.